The sequence spans 538 residues: Putative cysteine ligase BshC (538 aa).

Positions 454–482 form a coiled coil; the sequence is LEKNAGFIQDQLQFLEKTVIRRIEEKENY.

It belongs to the BshC family.

Functionally, involved in bacillithiol (BSH) biosynthesis. May catalyze the last step of the pathway, the addition of cysteine to glucosamine malate (GlcN-Mal) to generate BSH. In Bacillus licheniformis (strain ATCC 14580 / DSM 13 / JCM 2505 / CCUG 7422 / NBRC 12200 / NCIMB 9375 / NCTC 10341 / NRRL NRS-1264 / Gibson 46), this protein is Putative cysteine ligase BshC.